A 484-amino-acid polypeptide reads, in one-letter code: Glutamate--tRNA ligase (484 aa).

Residues 12–22 (PSPTGEPHVGT) carry the 'HIGH' region motif. The short motif at 253-257 (KLSKR) is the 'KMSKS' region element. K256 contacts ATP.

It belongs to the class-I aminoacyl-tRNA synthetase family. Glutamate--tRNA ligase type 1 subfamily. Monomer.

The protein resides in the cytoplasm. The catalysed reaction is tRNA(Glu) + L-glutamate + ATP = L-glutamyl-tRNA(Glu) + AMP + diphosphate. Its function is as follows. Catalyzes the attachment of glutamate to tRNA(Glu) in a two-step reaction: glutamate is first activated by ATP to form Glu-AMP and then transferred to the acceptor end of tRNA(Glu). This chain is Glutamate--tRNA ligase, found in Rhizobium etli (strain CIAT 652).